Consider the following 360-residue polypeptide: Alanine racemase (360 aa).

The Proton acceptor; specific for D-alanine role is filled by Lys34. Lys34 carries the post-translational modification N6-(pyridoxal phosphate)lysine. Residue Arg129 participates in substrate binding. Tyr254 acts as the Proton acceptor; specific for L-alanine in catalysis. Position 302 (Met302) interacts with substrate.

Belongs to the alanine racemase family. Pyridoxal 5'-phosphate serves as cofactor.

The enzyme catalyses L-alanine = D-alanine. The protein operates within amino-acid biosynthesis; D-alanine biosynthesis; D-alanine from L-alanine: step 1/1. Its function is as follows. Catalyzes the interconversion of L-alanine and D-alanine. May also act on other amino acids. This is Alanine racemase (alr) from Pectobacterium atrosepticum (strain SCRI 1043 / ATCC BAA-672) (Erwinia carotovora subsp. atroseptica).